Here is a 219-residue protein sequence, read N- to C-terminus: 2-phospho-L-lactate guanylyltransferase (219 aa).

Belongs to the CofC family. Homodimer.

It catalyses the reaction (2S)-2-phospholactate + GTP + H(+) = (2S)-lactyl-2-diphospho-5'-guanosine + diphosphate. It participates in cofactor biosynthesis; coenzyme F420 biosynthesis. Functionally, guanylyltransferase that catalyzes the activation of (2S)-2-phospholactate (2-PL) as (2S)-lactyl-2-diphospho-5'-guanosine, via the condensation of 2-PL with GTP. It is involved in the biosynthesis of coenzyme F420, a hydride carrier cofactor. This is 2-phospho-L-lactate guanylyltransferase from Methanocella arvoryzae (strain DSM 22066 / NBRC 105507 / MRE50).